Consider the following 80-residue polypeptide: UPF0346 protein LSEI_1394 (80 aa).

It belongs to the UPF0346 family.

The chain is UPF0346 protein LSEI_1394 from Lacticaseibacillus paracasei (strain ATCC 334 / BCRC 17002 / CCUG 31169 / CIP 107868 / KCTC 3260 / NRRL B-441) (Lactobacillus paracasei).